The chain runs to 75 residues: Putative defensin-like protein 119 (75 aa).

A signal peptide spans 1–25 (MAKSTIFAIFMIVFVLGMVTKETKG). 4 disulfide bridges follow: C29–C73, C39–C58, C44–C67, and C48–C69.

It belongs to the DEFL family.

It is found in the secreted. The polypeptide is Putative defensin-like protein 119 (LCR53) (Arabidopsis thaliana (Mouse-ear cress)).